Consider the following 669-residue polypeptide: DNA ligase (669 aa).

NAD(+)-binding positions include Asp-34–Asp-38, Ser-83–Leu-84, and Glu-114. Lys-116 serves as the catalytic N6-AMP-lysine intermediate. NAD(+) is bound by residues Arg-137, Glu-171, Lys-287, and Lys-311. Positions 405, 408, 423, and 428 each coordinate Zn(2+). The 79-residue stretch at Asn-591 to Lys-669 folds into the BRCT domain.

The protein belongs to the NAD-dependent DNA ligase family. LigA subfamily. The cofactor is Mg(2+). Requires Mn(2+) as cofactor.

The enzyme catalyses NAD(+) + (deoxyribonucleotide)n-3'-hydroxyl + 5'-phospho-(deoxyribonucleotide)m = (deoxyribonucleotide)n+m + AMP + beta-nicotinamide D-nucleotide.. Functionally, DNA ligase that catalyzes the formation of phosphodiester linkages between 5'-phosphoryl and 3'-hydroxyl groups in double-stranded DNA using NAD as a coenzyme and as the energy source for the reaction. It is essential for DNA replication and repair of damaged DNA. In Bacillus cereus (strain AH187), this protein is DNA ligase.